The primary structure comprises 81 residues: Short neurotoxin B (81 aa).

Residues 1 to 21 (MKTLLLTLVVVTIVCLDLGYT) form the signal peptide. Intrachain disulfides connect Cys-24-Cys-43, Cys-38-Cys-60, Cys-62-Cys-73, and Cys-74-Cys-79.

This sequence belongs to the three-finger toxin family. Short-chain subfamily. Type I alpha-neurotoxin sub-subfamily. In terms of tissue distribution, expressed by the venom gland.

The protein localises to the secreted. Binds to muscle nicotinic acetylcholine receptor (nAChR) and inhibit acetylcholine from binding to the receptor, thereby impairing neuromuscular transmission. This is Short neurotoxin B from Aipysurus laevis (Olive sea snake).